Consider the following 194-residue polypeptide: Inosine triphosphate pyrophosphatase (194 aa).

8 to 13 (TGNANK) lines the ITP pocket. Glutamate 47 contacts Mg(2+). Residues lysine 59, 75–76 (DT), lysine 92, 151–154 (FGWD), lysine 174, and 179–180 (HR) each bind ITP.

It belongs to the HAM1 NTPase family. In terms of assembly, homodimer. It depends on Mg(2+) as a cofactor. Requires Mn(2+) as cofactor.

The protein resides in the cytoplasm. It localises to the nucleus. The catalysed reaction is ITP + H2O = IMP + diphosphate + H(+). The enzyme catalyses dITP + H2O = dIMP + diphosphate + H(+). It carries out the reaction XTP + H2O = XMP + diphosphate + H(+). In terms of biological role, pyrophosphatase that hydrolyzes non-canonical purine nucleotides such as inosine triphosphate (ITP), deoxyinosine triphosphate (dITP) or xanthosine 5'-triphosphate (XTP) to their respective monophosphate derivatives. The enzyme does not distinguish between the deoxy- and ribose forms. Probably excludes non-canonical purines from RNA and DNA precursor pools, thus preventing their incorporation into RNA and DNA and avoiding chromosomal lesions. The protein is Inosine triphosphate pyrophosphatase of Scheffersomyces stipitis (strain ATCC 58785 / CBS 6054 / NBRC 10063 / NRRL Y-11545) (Yeast).